A 71-amino-acid chain; its full sequence is Large ribosomal subunit protein bL31 (71 aa).

4 residues coordinate Zn(2+): Cys16, Cys18, Cys37, and Cys40.

Belongs to the bacterial ribosomal protein bL31 family. Type A subfamily. As to quaternary structure, part of the 50S ribosomal subunit. Zn(2+) serves as cofactor.

Its function is as follows. Binds the 23S rRNA. This chain is Large ribosomal subunit protein bL31, found in Chromohalobacter salexigens (strain ATCC BAA-138 / DSM 3043 / CIP 106854 / NCIMB 13768 / 1H11).